The sequence spans 567 residues: Zinc finger protein 512 (567 aa).

The interval 1–34 (MSSRLGAVPATPGPTPFKQQRSTRIVGAKNSRTQ) is disordered. Residues lysine 18 and lysine 84 each participate in a glycyl lysine isopeptide (Lys-Gly) (interchain with G-Cter in SUMO2) cross-link. Residues 87 to 148 (AASHVEGPGG…QTRRIRKEPP (62 aa)) are disordered. Over residues 119 to 130 (KKHKLYGRKQRP) the composition is skewed to basic residues. A C2H2-type 1 zinc finger spans residues 197-220 (FTCHHCGKQLRSLAGMKYHVMANH). Lysine 227 is covalently cross-linked (Glycyl lysine isopeptide (Lys-Gly) (interchain with G-Cter in SUMO2)). The segment at 287–310 (LKCHHCGKPYRSKAGLAYHLRSEH) adopts a C2H2-type 2 zinc-finger fold. Residue lysine 333 forms a Glycyl lysine isopeptide (Lys-Gly) (interchain with G-Cter in SUMO2) linkage. The C2H2-type 3; atypical zinc-finger motif lies at 406–430 (IQCPNQGCEAVYSSVSGLKAHLGSC). The C2H2-type 3 zinc finger occupies 440-463 (YKCLLCQKEFVSESGVKYHINSVH). Basic and acidic residues predominate over residues 485-494 (KQRQQEEEKR). A disordered region spans residues 485–567 (KQRQQEEEKR…PKTNHKRGKK (83 aa)). Basic residues predominate over residues 495 to 508 (RQQHRSRRSLRRRQ). Residues 523 to 544 (VGKDQRRNHEELLVATSRKEPE) are compositionally biased toward basic and acidic residues. Residues 556–567 (RSPKTNHKRGKK) are compositionally biased toward basic residues.

The protein belongs to the krueppel C2H2-type zinc-finger protein family.

The protein localises to the nucleus. In terms of biological role, may be involved in transcriptional regulation. This Bos taurus (Bovine) protein is Zinc finger protein 512 (ZNF512).